The primary structure comprises 671 residues: UvrABC system protein C (671 aa).

The 80-residue stretch at 16 to 95 folds into the GIY-YIG domain; that stretch reads VEPGVYRFRD…IKEFDPRFNV (80 aa). Positions 208–243 constitute a UVR domain; it reads DRLARDMEREMNQAAQELNFERAARLRDNISALQRA. The interval 645–671 is disordered; it reads SSAPSSGATEAVLPAMVENGVDDTPST.

Belongs to the UvrC family. As to quaternary structure, interacts with UvrB in an incision complex.

Its subcellular location is the cytoplasm. In terms of biological role, the UvrABC repair system catalyzes the recognition and processing of DNA lesions. UvrC both incises the 5' and 3' sides of the lesion. The N-terminal half is responsible for the 3' incision and the C-terminal half is responsible for the 5' incision. The sequence is that of UvrABC system protein C from Mycobacteroides abscessus (strain ATCC 19977 / DSM 44196 / CCUG 20993 / CIP 104536 / JCM 13569 / NCTC 13031 / TMC 1543 / L948) (Mycobacterium abscessus).